The sequence spans 190 residues: Translation initiation factor IF-3 (190 aa).

A disordered region spans residues 159-190 (QSEVQQKPKREGRNMIMFLSPRKSPLIKKDNE).

This sequence belongs to the IF-3 family. Monomer.

The protein localises to the cytoplasm. In terms of biological role, IF-3 binds to the 30S ribosomal subunit and shifts the equilibrium between 70S ribosomes and their 50S and 30S subunits in favor of the free subunits, thus enhancing the availability of 30S subunits on which protein synthesis initiation begins. The protein is Translation initiation factor IF-3 of Prochlorococcus marinus (strain MIT 9215).